Consider the following 345-residue polypeptide: Uroporphyrinogen decarboxylase (345 aa).

Substrate is bound by residues 27–31, Phe46, Asp76, Tyr152, Ser207, and His320; that span reads RQAGR.

The protein belongs to the uroporphyrinogen decarboxylase family. In terms of assembly, homodimer.

The protein localises to the cytoplasm. It catalyses the reaction uroporphyrinogen III + 4 H(+) = coproporphyrinogen III + 4 CO2. It functions in the pathway porphyrin-containing compound metabolism; protoporphyrin-IX biosynthesis; coproporphyrinogen-III from 5-aminolevulinate: step 4/4. Its function is as follows. Catalyzes the decarboxylation of four acetate groups of uroporphyrinogen-III to yield coproporphyrinogen-III. The sequence is that of Uroporphyrinogen decarboxylase from Oceanobacillus iheyensis (strain DSM 14371 / CIP 107618 / JCM 11309 / KCTC 3954 / HTE831).